A 1016-amino-acid chain; its full sequence is S-layer protein A (1016 aa).

The first 30 residues, 1-30 (MDLSTKKVISAGLVFIYALSLAMLVPMFLA), serve as a signal peptide directing secretion.

This sequence belongs to the Sulfolobales SlaA family. In terms of assembly, the mushroom-shaped unit cells of the Sulfolobales' S-layers may consist of three SlaB subunits and six SlaA subunits.

The protein resides in the secreted. It localises to the cell wall. The protein localises to the S-layer. In terms of biological role, S-layer large protein. May form the highly ordered outer sheath. The polypeptide is S-layer protein A (Acidianus ambivalens (Desulfurolobus ambivalens)).